The sequence spans 584 residues: MSHQPLSCLTEKGDSPCETPGNGPSNMVHPSLDTFTPEELLQQMKELLVENHQLKEAMKLNNQAMKGRFEELSAWTEKQKEERLLFEMQSKEVKERLKALTHENERLKEELGKFKEKSEKPLEDLTGGYRYPRALEEEVEKLKTQVEQEVEHLKIQVMRLRAEKADLLGIVSELQLKLNSGGSSEDSFVEIRMTEGETEGAMKEMKNCPTPTRTDPISLSNCTEDARSCAEFEELTVSQLLLCLREGNQKVERLEVALREAKERISDFEKKANGHSSTEKQTARRADREKEDKGQESVGSEVETLSIQVTSLFKELQEAHTKLSEAELMKKRLQEKCQALERKNSATPSELNEKQELVYSNKKLELQVESMRSEIKMEQAKTEEEKSRLATLQATHNKLLQEHNKALKTIEELTKQQAEKVDKMLLQELSEKLELAEQALASKQLQMDEMKQTLAKQEEDLETMAVLRAQMEVYCSDFHAERAAREKIHEEKEQLALQLAILLKENNDIEEGGSRQSLMEMQCRHGARTSDSDQQTYLFQRGAEDRSWQHGQQPRSIPIHSCPKCGEVLPDIDTLQIHVMDCII.

A disordered region spans residues 1–32 (MSHQPLSCLTEKGDSPCETPGNGPSNMVHPSL). A coiled-coil region spans residues 38–180 (EELLQQMKEL…VSELQLKLNS (143 aa)). The interaction with Rab8 stretch occupies residues 58–219 (MKLNNQAMKG…TPTRTDPISL (162 aa)). An LIR motif is present at residues 186-191 (DSFVEI). Serine 187 carries the post-translational modification Phosphoserine. 2 coiled-coil regions span residues 243 to 278 (CLRE…HSST) and 307 to 511 (IQVT…DIEE). A compositionally biased stretch (basic and acidic residues) spans 267–295 (DFEKKANGHSSTEKQTARRADREKEDKGQ). The interval 267 to 302 (DFEKKANGHSSTEKQTARRADREKEDKGQESVGSEV) is disordered. At serine 345 the chain carries Phosphoserine. Positions 414-584 (TKQQAEKVDK…LQIHVMDCII (171 aa)) are interaction with HD. The interval 415–524 (KQQAEKVDKM…RQSLMEMQCR (110 aa)) is interaction with MYO6. Residues 477 to 482 (DFHAER) carry the UBAN motif. Serine 530 is modified (phosphoserine). The CCHC NOA-type zinc finger occupies 554-584 (PRSIPIHSCPKCGEVLPDIDTLQIHVMDCII). Cysteine 562, cysteine 565, histidine 578, and cysteine 582 together coordinate Zn(2+).

As to quaternary structure, self-associates. Interacts with HD, GTF3A, TRAF3, TBK1 and MYO6. Interacts (via UBAN) with ubiquitinated TFRC. Interacts with active GTP-bound Rab8 (RAB8A and/or RAB8B). Interacts with TBC1D17. Binds to linear ubiquitin chains. Interacts with LC3 family members MAP1LC3A, MAP1LC3B, GABARAP, GABARAPL1 and GABARAPL2; OPTN phosphorylation increases the association (at least with MAP1LC3B). Interacts with RAB12; the interaction may be indirect. Interacts with TBK1; this interaction leads to the Golgi localization of TBK1 and its subsequent activation. Interacts with palmitoyltransferase ZDHHC17/HIP14; the interaction does not lead to palmitoylation of OPTN. Interacts with CYLD. Interacts with TOM1; the interaction is indirect and is mediated by MYO6, which acts as a bridge between TOM1 and OPTN. Interacts with USP12; the interaction is independent of USP12 deubiquitinase activity and may be involved in regulation of autophagic flux. In terms of processing, phosphorylated by TBK1, leading to restrict bacterial proliferation in case of infection. In eye, it is expressed in anterior segment, retina, and optic nerve blood vessels (at protein level). Highly expressed in adult liver, heart and testis.

The protein localises to the cytoplasm. The protein resides in the perinuclear region. It is found in the golgi apparatus. It localises to the trans-Golgi network. Its subcellular location is the cytoplasmic vesicle. The protein localises to the autophagosome. The protein resides in the recycling endosome. In terms of biological role, plays an important role in the maintenance of the Golgi complex, in membrane trafficking, in exocytosis, through its interaction with myosin VI and Rab8. Links myosin VI to the Golgi complex and plays an important role in Golgi ribbon formation. Plays a role in the activation of innate immune response during viral infection. Mechanistically, recruits TBK1 at the Golgi apparatus, promoting its trans-phosphorylation after RLR or TLR3 stimulation. In turn, activated TBK1 phosphorylates its downstream partner IRF3 to produce IFN-beta. Plays a neuroprotective role in the eye and optic nerve. May act by regulating membrane trafficking and cellular morphogenesis via a complex that contains Rab8 and huntingtin (HD). Mediates the interaction of Rab8 with the probable GTPase-activating protein TBC1D17 during Rab8-mediated endocytic trafficking, such as that of transferrin receptor (TFRC/TfR); regulates Rab8 recruitment to tubules emanating from the endocytic recycling compartment. Autophagy receptor that interacts directly with both the cargo to become degraded and an autophagy modifier of the MAP1 LC3 family; targets ubiquitin-coated bacteria (xenophagy), such as cytoplasmic Salmonella enterica, and appears to function in the same pathway as SQSTM1 and CALCOCO2/NDP52. This chain is Optineurin (Optn), found in Mus musculus (Mouse).